A 463-amino-acid chain; its full sequence is Argininosuccinate lyase (463 aa).

The protein belongs to the lyase 1 family. Argininosuccinate lyase subfamily.

The protein localises to the cytoplasm. It carries out the reaction 2-(N(omega)-L-arginino)succinate = fumarate + L-arginine. It participates in amino-acid biosynthesis; L-arginine biosynthesis; L-arginine from L-ornithine and carbamoyl phosphate: step 3/3. The polypeptide is Argininosuccinate lyase (Chlorobaculum tepidum (strain ATCC 49652 / DSM 12025 / NBRC 103806 / TLS) (Chlorobium tepidum)).